The chain runs to 258 residues: C1q-related factor (258 aa).

Positions 1-16 (MLLVLVVLIPVLVSSG) are cleaved as a signal peptide. The tract at residues 39–117 (GPGAGARTDG…PGLPGAGGSG (79 aa)) is disordered. Low complexity predominate over residues 67–77 (GPQGKPGRTGK). The 49-residue stretch at 67–115 (GPQGKPGRTGKPGPPGPPGDPGPPGPVGPPGEKGEPGKPGPPGLPGAGG) folds into the Collagen-like domain. Residues 78-95 (PGPPGPPGDPGPPGPVGP) are compositionally biased toward pro residues. Positions 125–258 (TTVPRVAFYA…TFSGFIIYSD (134 aa)) constitute a C1q domain.

As to quaternary structure, interacts with ADGRB3. Forms heterooligomers with C1QL4, when proteins are coexpressed; this interaction does not occur after secretion. As to expression, expressed in brainstem.

It is found in the secreted. May regulate the number of excitatory synapses that are formed on hippocampus neurons. Has no effect on inhibitory synapses. This Homo sapiens (Human) protein is C1q-related factor (C1QL1).